Reading from the N-terminus, the 195-residue chain is Lipid A acyltransferase PagP (195 aa).

An N-terminal signal peptide occupies residues 1–30 (MRLTLTSRSRLFVLSSLLFISTFDVLSAQA). Active-site residues include His-67, Asp-110, and Ser-111.

The protein belongs to the lipid A palmitoyltransferase family. As to quaternary structure, homodimer.

The protein resides in the cell outer membrane. It catalyses the reaction a lipid A + a 1,2-diacyl-sn-glycero-3-phosphocholine = a hepta-acyl lipid A + a 2-acyl-sn-glycero-3-phosphocholine. The enzyme catalyses a lipid IVA + a 1,2-diacyl-sn-glycero-3-phosphocholine = a lipid IVB + a 2-acyl-sn-glycero-3-phosphocholine. The catalysed reaction is a lipid IIA + a 1,2-diacyl-sn-glycero-3-phosphocholine = a lipid IIB + a 2-acyl-sn-glycero-3-phosphocholine. In terms of biological role, transfers a fatty acid residue from the sn-1 position of a phospholipid to the N-linked hydroxyfatty acid chain on the proximal unit of lipid A or its precursors. The protein is Lipid A acyltransferase PagP of Dickeya chrysanthemi (strain Ech1591) (Dickeya zeae (strain Ech1591)).